The sequence spans 1342 residues: DNA-directed RNA polymerase subunit beta (1342 aa).

Belongs to the RNA polymerase beta chain family. In terms of assembly, the RNAP catalytic core consists of 2 alpha, 1 beta, 1 beta' and 1 omega subunit. When a sigma factor is associated with the core the holoenzyme is formed, which can initiate transcription.

The enzyme catalyses RNA(n) + a ribonucleoside 5'-triphosphate = RNA(n+1) + diphosphate. DNA-dependent RNA polymerase catalyzes the transcription of DNA into RNA using the four ribonucleoside triphosphates as substrates. The sequence is that of DNA-directed RNA polymerase subunit beta from Actinobacillus pleuropneumoniae serotype 3 (strain JL03).